The sequence spans 316 residues: Phosphatidylinositol mannoside acyltransferase (316 aa).

His137 acts as the Proton acceptor in catalysis. Residues His137 and Arg175 each contribute to the hexadecanoyl-CoA site. The active site involves Glu211. Hexadecanoyl-CoA is bound at residue Glu240.

It belongs to the LpxL/LpxM/LpxP family.

The protein resides in the cell inner membrane. It carries out the reaction a 2,6-O-bis(alpha-D-mannopyranosyl)-1-phosphatidyl-1D-myo-inositol + an acyl-CoA = a 2-O-(alpha-D-mannosyl)-6-O-(6-O-acyl-alpha-D-mannosyl)-1-phosphatidyl-1D-myo-inositol + CoA. The enzyme catalyses a 1,2-diacyl-sn-glycero-3-phospho-[alpha-D-mannopyranosyl-(1&lt;-&gt;6)-D-myo-inositol] + an acyl-CoA = a 1,2-diacyl-sn-glycero-3-phospho-[alpha-D-6-acyl-mannopyranosyl-(1&lt;-&gt;6)-D-myo-inositol] + CoA. It participates in phospholipid metabolism; phosphatidylinositol metabolism. In terms of biological role, catalyzes the transfer of a palmitoyl moiety from palmitoyl-CoA to the 6-position of the mannose ring linked to the 2-position of myo-inositol in phosphatidyl-myo-inositol monomannoside (PIM1) or dimannoside (PIM2). The sequence is that of Phosphatidylinositol mannoside acyltransferase from Mycobacterium tuberculosis (strain CDC 1551 / Oshkosh).